A 341-amino-acid chain; its full sequence is tRNA N6-adenosine threonylcarbamoyltransferase (341 aa).

Residues His111 and His115 each contribute to the Fe cation site. Substrate contacts are provided by residues 134 to 138, Asp167, Gly180, and Asn276; that span reads LVSGG. Asp304 contacts Fe cation.

The protein belongs to the KAE1 / TsaD family. Requires Fe(2+) as cofactor.

It localises to the cytoplasm. The enzyme catalyses L-threonylcarbamoyladenylate + adenosine(37) in tRNA = N(6)-L-threonylcarbamoyladenosine(37) in tRNA + AMP + H(+). Required for the formation of a threonylcarbamoyl group on adenosine at position 37 (t(6)A37) in tRNAs that read codons beginning with adenine. Is involved in the transfer of the threonylcarbamoyl moiety of threonylcarbamoyl-AMP (TC-AMP) to the N6 group of A37, together with TsaE and TsaB. TsaD likely plays a direct catalytic role in this reaction. This Pseudomonas paraeruginosa (strain DSM 24068 / PA7) (Pseudomonas aeruginosa (strain PA7)) protein is tRNA N6-adenosine threonylcarbamoyltransferase.